The primary structure comprises 1368 residues: MQYSFTEKKRIRKSFAKRPIVHQVPFLLATQLESFSTFLQADTSSTQRKPEGLQAAFTSVFPIVSHNGFARLEFVSYMLSPPAFNIKECQQRGLTYCSALRAKVRLVLLDKESPSKPVVKEVKEQEVYMGEIPLMTPTGSFVINGTERVIVSQLHRSPGVFFEHDKGKTHSSGKLLFSARIIPYRGSWLDFEFDPKDVLYFRVDRRRKMPVTILLKAIGLTPEQILANFFVFDNFTLMPEGAQMEFVPERLRGEVARFDITDRDGNVIVQKDKRINAKHIRDLDNAKTKFISVPEDYLLGRVLAKNVVDGDTGEVIANANDEITETVLEKLRESKIKDIQTLYTNDLDQGPYISSTLRIDETADKMAARIAIYRMMRPGEPPTEEAVEALFNRLFYSEDAYDLSKVGRMKFNRRVGRDEIVGPMTLQDDDILATIKILVELRNGKGEVDDIDHLGNRRVRCVGELAENQFRAGLVRVERAVKERLGQAESENLMPHDLINSKPISSAIREFFGSSQLSQFMDQTNPLSEITHKRRVSALGPGGLTRERAGFEVRDVHPTHYGRVCPIETPEGPNIGLINSLALYAHLNEYGFLETPYRKVVDSKVTDQIDYLSAIEEGRYVIAQANAAVAEDGSLTDELVSSREAGETLMVTPDRIQYMDVAPSQIVSVAASLIPFLEHDDANRALMGSNMQRQAVPCLRPEKAVVGTGIERTVAVDSGTTVQAFRGGVVDYVDAGRMVIRVNDDEAVAGDVGVDIYNLIKYTRSNQNTNINQRPIVKVGDIVSRGDVLADGASTDLGELALGQNMLVAFMPWNGYNFEDSILISEKVVADDRYTSIHIEELNVVARDTKLGPEEITRDISNLAEVQLGRLDESGIVYIGAEVEAGDVLVGKVTPKGETQLTPEEKLLRAIFGEKASDVKDTSLRVPSGMSGTVIDVQVFTREGIQRDKRAQQIIDDELKRYRLDLNDQLRIVEGDAFQRLARMLTGKVANGGPKKLAKGTKIEQAYLEDLDHYHWFDIRLADEEAAAQLEAIKDSIEQKRHQFDLAFEEKRKKLTQGDELPPGVLKMVKVYLAVKRRLQPGDKMAGRHGNKGVVSKIVPIEDMPYMADGRPADVVLNPLGVPSRMNVGQVLEVHLGWAAKGLGWRIGEMLQRQAKIAELREFLTKIYNESGRAEELDSFTDDEIVELAKNLREGVPFATPVFDGATEEEMSRALDLAFPDDIAKNLGMTPSKNQVRLYDGRTGEMFERTVTVGYMHYLKLHHLVDDKMHARSTGPYSLVTQQPLGGKAQFGGQRFGEMEVWALEAYGASYVLQEMLTVKSDDVTGRTKVYENLVKGDHVIDAGMPESFNVLVKEIRSLGIDIDLDRN.

Belongs to the RNA polymerase beta chain family. As to quaternary structure, the RNAP catalytic core consists of 2 alpha, 1 beta, 1 beta' and 1 omega subunit. When a sigma factor is associated with the core the holoenzyme is formed, which can initiate transcription.

The catalysed reaction is RNA(n) + a ribonucleoside 5'-triphosphate = RNA(n+1) + diphosphate. In terms of biological role, DNA-dependent RNA polymerase catalyzes the transcription of DNA into RNA using the four ribonucleoside triphosphates as substrates. The chain is DNA-directed RNA polymerase subunit beta from Paraburkholderia xenovorans (strain LB400).